Reading from the N-terminus, the 361-residue chain is Nuclear pore complex protein NUP43 (361 aa).

The tract at residues 51–73 (IQSLDPNPRGNHNTNPLIESLSS) is disordered. 3 WD repeats span residues 132–173 (FHVG…YRKV), 177–215 (NGLV…EAVS), and 225–265 (KTSA…QPIV).

As to quaternary structure, part of the nuclear pore complex (NPC). The NPC has an eight-fold symmetrical structure comprising a central transport channel and two rings, the cytoplasmic and nuclear rings, to which eight filaments are attached. The cytoplasmic filaments have loose ends, while the nuclear filaments are joined in a distal ring, forming a nuclear basket. NPCs are highly dynamic in configuration and composition, and can be devided in 3 subcomplexes, the NUP62 subcomplex, the NUP107-160 subcomplex and the NUP93 subcomplex, containing approximately 30 different nucleoporin proteins.

Its subcellular location is the nucleus envelope. It is found in the nucleus. The protein localises to the nuclear pore complex. This Arabidopsis thaliana (Mouse-ear cress) protein is Nuclear pore complex protein NUP43.